The sequence spans 466 residues: Uronate isomerase (466 aa).

This sequence belongs to the metallo-dependent hydrolases superfamily. Uronate isomerase family.

The enzyme catalyses D-glucuronate = D-fructuronate. It carries out the reaction aldehydo-D-galacturonate = keto-D-tagaturonate. It functions in the pathway carbohydrate metabolism; pentose and glucuronate interconversion. This Streptococcus agalactiae serotype V (strain ATCC BAA-611 / 2603 V/R) protein is Uronate isomerase.